Here is a 66-residue protein sequence, read N- to C-terminus: UPF0337 protein BA_0987/GBAA_0987/BAS0923 (66 aa).

A disordered region spans residues 1–22; it reads MSESGLKEQITGKVEKTKGQVK. Basic and acidic residues predominate over residues 13–22; it reads KVEKTKGQVK.

This sequence belongs to the UPF0337 (CsbD) family.

In Bacillus anthracis, this protein is UPF0337 protein BA_0987/GBAA_0987/BAS0923.